A 156-amino-acid chain; its full sequence is Snaclec jerdonibitin subunit alpha (156 aa).

The first 23 residues, Met1 to Ala23, serve as a signal peptide directing secretion. Intrachain disulfides connect Cys25–Cys36, Cys53–Cys150, and Cys125–Cys142. The C-type lectin domain maps to Phe32–Lys151.

The protein belongs to the snaclec family. Heterodimer of subunits alpha and beta; disulfide-linked. Expressed by the venom gland.

Its subcellular location is the secreted. Snaclec that dose-dependently inhibits platelet aggregation induced by ristocetin or low-dose thrombin, but not by high-dose thrombin. Binds to GPIbalpha (GP1BA). In vivo, also dose-dependently induces thrombocytopenia of mice and platelet counts remains at very low level even after 18 hours intravenous injection. In Protobothrops jerdonii (Jerdon's pitviper), this protein is Snaclec jerdonibitin subunit alpha.